Here is a 593-residue protein sequence, read N- to C-terminus: Developmental and secondary metabolism regulator VEL1 (593 aa).

The segment covering 1-16 (MSNIVVSNETKSQSVR) has biased composition (polar residues). Positions 1–21 (MSNIVVSNETKSQSVRTTKDG) are disordered. The Velvet domain occupies 21–212 (GRQIRYNLQV…AEQGCRVRIR (192 aa)). A Nuclear localization signal motif is present at residues 35–40 (ERARAC). A disordered region spans residues 218–569 (RRRENKSSKE…PGSPDMEEPM (352 aa)). Residues 310-326 (PSYGSNQPQYSQQYQTP) are compositionally biased toward low complexity. A compositionally biased stretch (pro residues) spans 327–340 (QPAPMMQPPQPPQH). Low complexity-rich tracts occupy residues 341–360 (STPYSQHSQHSSYSSQHQAQ) and 367–389 (QQYGYSNYQQQPQQPQSQSQPQY). Polar residues-rich tracts occupy residues 413 to 429 (SSITQSPAQQYTASSHP) and 440 to 449 (GRSQQMSQPL). The segment at 443 to 487 (QQMSQPLHSSPQSYASSAPSHQSLPSLRPIVADKLEPVSPSYQSP) is PEST. Low complexity predominate over residues 450-465 (HSSPQSYASSAPSHQS). Polar residues-rich tracts occupy residues 482–505 (PSYQSPPTSMSAAISVNSDGSNQH) and 512–534 (NPQTQGLPPMSATSNKRSFSSTF).

It belongs to the velvet family. VeA subfamily. In terms of assembly, component of the heterotrimeric velvet complex composed of LAE1, VEL1 and VEL2; VEL1 acting as a bridging protein between LAE1 and VEL2.

The protein resides in the nucleus. The protein localises to the cytoplasm. Functionally, component of the velvet transcription factor complex that controls sexual/asexual developmental ratio in response to light, promoting sexual development in the darkness while stimulating asexual sporulation under illumination. The velvet complex acts as a global regulator for secondary metabolite gene expression. Controls the expression of the T-toxin gene cluster. Promotes oxidative stress tolerance and acts as a virulence factors during infection. Negatively regulate mycelial pigmentation and controls sexual development, as well as asexual development during vegetative growth. In Cochliobolus heterostrophus (strain C5 / ATCC 48332 / race O) (Southern corn leaf blight fungus), this protein is Developmental and secondary metabolism regulator VEL1.